The following is a 256-amino-acid chain: Trypsin, alkaline C (256 aa).

Residues 1-17 form the signal peptide; it reads MRLFLALLALGFAAVAA. Residues 18 to 24 constitute a propeptide, activation peptide; that stretch reads VPANPQR. The Peptidase S1 domain maps to 25–256; that stretch reads IVGGSTTTIQ…RYTSWISNNS (232 aa). The cysteines at positions 55 and 71 are disulfide-linked. Catalysis depends on charge relay system residues H70 and D115. Disulfide bonds link C180–C197 and C209–C233. The Charge relay system role is filled by S213.

It belongs to the peptidase S1 family. As to expression, midgut.

Its subcellular location is the secreted. The protein resides in the extracellular space. It catalyses the reaction Preferential cleavage: Arg-|-Xaa, Lys-|-Xaa.. The polypeptide is Trypsin, alkaline C (Manduca sexta (Tobacco hawkmoth)).